The chain runs to 121 residues: Large ribosomal subunit protein bL12 (121 aa).

This sequence belongs to the bacterial ribosomal protein bL12 family. As to quaternary structure, homodimer. Part of the ribosomal stalk of the 50S ribosomal subunit. Forms a multimeric L10(L12)X complex, where L10 forms an elongated spine to which 2 to 4 L12 dimers bind in a sequential fashion. Binds GTP-bound translation factors.

In terms of biological role, forms part of the ribosomal stalk which helps the ribosome interact with GTP-bound translation factors. Is thus essential for accurate translation. The polypeptide is Large ribosomal subunit protein bL12 (Aliivibrio salmonicida (strain LFI1238) (Vibrio salmonicida (strain LFI1238))).